Here is a 222-residue protein sequence, read N- to C-terminus: Tegument protein UL26 (222 aa).

This sequence belongs to the herpesviridae US22 family. In terms of assembly, interacts with UL25. Interacts with ISGylation machinery components ISG15, UBA7 and HERC5; these interactions inhibit global protein ISGylation. Post-translationally, ISGylated; ISGylation regulates UL26 stability and inhibits its activities to suppress NF-kappa-B signaling.

It is found in the virion tegument. It localises to the host nucleus. Plays a role in the inhibition of host NF-kappa-B. This inhibition affects both the canonical and the non-canonical pathways. Blocks the induction of host IKK phosphorylation. May also influence the normal phosphorylation state of several tegument proteins including pp28 in virions. Also suppresses virus-induced ISGylation independent of its own ISGylation. This Homo sapiens (Human) protein is Tegument protein UL26 (UL26).